The sequence spans 785 residues: Adhesion G-protein coupled receptor G7 (785 aa).

The first 26 residues, 1-26 (MRSCRSCNVRVLVAIVCGLLTGIVLG), serve as a signal peptide directing secretion. At 27-435 (LGIWRMVIRI…KYPKSLDILS (409 aa)) the chain is on the extracellular side. Asn-82, Asn-122, Asn-133, Asn-152, Asn-159, Asn-178, Asn-195, Asn-239, Asn-289, Asn-348, Asn-400, and Asn-408 each carry an N-linked (GlcNAc...) asparagine glycan. The 155-residue stretch at 271–425 (FSVQKGSSNS…AVLMSFKKDY (155 aa)) folds into the GAIN-B domain. Cystine bridges form between Cys-380/Cys-407 and Cys-395/Cys-409. Residues 380-425 (CVYWNFLINDWDTQGCQKTGNTTEFLRCNCSHTTNFAVLMSFKKDY) form a GPS region. The helical transmembrane segment at 436–456 (NIGCALSIAGLALTILFQILT) threads the bilayer. The Cytoplasmic portion of the chain corresponds to 457–465 (RKIRKTSVT). A helical transmembrane segment spans residues 466–486 (WVLVSLCSSMLIFNLLFVFGI). Over 487–523 (ENSNKNLKTSDSDINVKPENNKIPESDTIETPNPSCT) the chain is Extracellular. The chain crosses the membrane as a helical span at residues 524–544 (AIAALLHYFLLVTFTWNGLSA). At 545-561 (TQLYFLLIRTMKPLPRH) the chain is on the cytoplasmic side. A helical transmembrane segment spans residues 562-582 (FIIFISLVGWGVPAIIVGVTI). At 583–623 (GSIYALSGNKRYWELDYRQEEICWLAVPKDNDYARSPLLWS) the chain is on the extracellular side. The chain crosses the membrane as a helical span at residues 624–644 (FIIPVTIILITNITIFVIITV). At 645-668 (KVLWKNNQNLTSTKKVSSLKKVFS) the chain is on the cytoplasmic side. A helical transmembrane segment spans residues 669–689 (TLSIAVVFGVTWILAYAMLIS). Over 690–694 (NDDIR) the chain is Extracellular. The chain crosses the membrane as a helical span at residues 695-715 (IVFSYIFCLFNTTQGLQIFIL). Residues 716–785 (YTVRTKVFQS…SGMTEETSLS (70 aa)) are Cytoplasmic-facing.

This sequence belongs to the G-protein coupled receptor 2 family. Adhesion G-protein coupled receptor (ADGR) subfamily. As to expression, selectively expressed in the intestinal tissues.

It is found in the membrane. Functionally, orphan receptor. This is Adhesion G-protein coupled receptor G7 (Adgrg7) from Mus musculus (Mouse).